Reading from the N-terminus, the 256-residue chain is uncharacterized protein (256 aa).

It to B.subtilis LplA.

This is an uncharacterized protein from Niallia circulans (Bacillus circulans).